Reading from the N-terminus, the 376-residue chain is Chaperone protein DnaJ (376 aa).

The region spanning D5 to G70 is the J domain. A CR-type zinc finger spans residues G135–Q213. 8 residues coordinate Zn(2+): C148, C151, C165, C168, C187, C190, C201, and C204. CXXCXGXG motif repeat units lie at residues C148–G155, C165–G172, C187–G194, and C201–G208.

Belongs to the DnaJ family. In terms of assembly, homodimer. Zn(2+) serves as cofactor.

It localises to the cytoplasm. Participates actively in the response to hyperosmotic and heat shock by preventing the aggregation of stress-denatured proteins and by disaggregating proteins, also in an autonomous, DnaK-independent fashion. Unfolded proteins bind initially to DnaJ; upon interaction with the DnaJ-bound protein, DnaK hydrolyzes its bound ATP, resulting in the formation of a stable complex. GrpE releases ADP from DnaK; ATP binding to DnaK triggers the release of the substrate protein, thus completing the reaction cycle. Several rounds of ATP-dependent interactions between DnaJ, DnaK and GrpE are required for fully efficient folding. Also involved, together with DnaK and GrpE, in the DNA replication of plasmids through activation of initiation proteins. This chain is Chaperone protein DnaJ, found in Stutzerimonas stutzeri (Pseudomonas stutzeri).